The primary structure comprises 92 residues: Cell division topological specificity factor (92 aa).

The protein belongs to the MinE family.

Prevents the cell division inhibition by proteins MinC and MinD at internal division sites while permitting inhibition at polar sites. This ensures cell division at the proper site by restricting the formation of a division septum at the midpoint of the long axis of the cell. This Desulforamulus reducens (strain ATCC BAA-1160 / DSM 100696 / MI-1) (Desulfotomaculum reducens) protein is Cell division topological specificity factor.